The chain runs to 368 residues: MSETAKKVIVGMSGGVDSSVSAWLLQQQGYQVEGLFMKNWEEDDGEEYCTAAADLADAQAVCDKLGIELHTVNFAAEYWDNVFELFLAEYKAGRTPNPDILCNKEIKFKAFLEFAAEDLGADYIATGHYVRRADVDGKSRLLRGLDSNKDQSYFLYTLSHEQIAQSLFPVGELEKPQVRKIAEDLGLVTAKKKDSTGICFIGERKFREFLGRYLPAQPGKIITVDGDEIGEHQGLMYHTLGQRKGLGIGGTKEGTEEPWYVVDKDVENNILVVAQGHEHPRLMSVGLIAQQLHWVDREPFTGTMRCTVKTRYRQTDIPCTVKALDDDRIKVIFDEPVAAVTPGQSAVFYNGEVCLGGGIIEQRLPLPV.

ATP-binding positions include 11-18 (GMSGGVDS) and methionine 37. The segment at 97–99 (NPD) is interaction with target base in tRNA. Cysteine 102 acts as the Nucleophile in catalysis. A disulfide bridge connects residues cysteine 102 and cysteine 199. Glycine 127 contacts ATP. Residues 149–151 (KDQ) are interaction with tRNA. Cysteine 199 acts as the Cysteine persulfide intermediate in catalysis. The interaction with tRNA stretch occupies residues 311–312 (RY).

It belongs to the MnmA/TRMU family. In terms of assembly, interacts with TusE.

It is found in the cytoplasm. It catalyses the reaction S-sulfanyl-L-cysteinyl-[protein] + uridine(34) in tRNA + AH2 + ATP = 2-thiouridine(34) in tRNA + L-cysteinyl-[protein] + A + AMP + diphosphate + H(+). In terms of biological role, catalyzes the 2-thiolation of uridine at the wobble position (U34) of tRNA(Lys), tRNA(Glu) and tRNA(Gln), leading to the formation of s(2)U34, the first step of tRNA-mnm(5)s(2)U34 synthesis. Sulfur is provided by IscS, via a sulfur-relay system. Binds ATP and its substrate tRNAs. This is tRNA-specific 2-thiouridylase MnmA from Shigella flexneri serotype 5b (strain 8401).